The following is a 569-amino-acid chain: MFYMTGQEYDVVVVGSGAAGMVAALTAAHQGLSTVVVEKAPHYGGSTARSGGGVWIPNNEILKRDGVKDTPDEARKYLHAIIGDVVPAEKIDTYLDRGPEMLSFVLKHSPLKLCWVPGYSDYYPETPGGKPTGRSVEPKPFDANKLGPDLKGLEPPYGKVPMNMVVMQQDYVRLNQLKRHPRGVLRSLKVGIRATWGKVSGKNLVGMGRALIAPLRIGLREAGVPVLLNTALTDLYVEDGRVLGIYVRDTTAGDDAEPRLIRARHGVILGSGGFEHNEQMRVKYQRAPITTEWTVGAVANTGDGIVAAEKLGAALELMEDAWWGPTVPLVGAPWFALSERNSPGSIIVNMSGKRFMNESMPYVEACHHMYGGQYGQGPGPGENIPAWLIFDQQYRDRYIFAGLQPGQRIPSKWLESGVIVKADTLVELAEKTGLPADQFTSTIERFNGFARSGVDEDFHRGESAYDRYYGDPTNKPNPNLGEIKHGPFYAAKMVPGDLGTKGGIRTDVRGRALRDDDSVIEGLYAAGNVSSPVMGHTYPGPGGTIGPAMTFGYLAALDIAATAAASRKG.

Residue 10 to 39 (DVVVVGSGAAGMVAALTAAHQGLSTVVVEK) coordinates FAD. The disordered stretch occupies residues 127-148 (PGGKPTGRSVEPKPFDANKLGP).

It belongs to the FAD-dependent oxidoreductase 2 family. 3-oxosteroid dehydrogenase subfamily. FAD is required as a cofactor.

The enzyme catalyses a 3-oxosteroid + A = a 3-oxo-Delta(1)-steroid + AH2. The catalysed reaction is a 3-oxo-Delta(4)-steroid + A = a 3-oxo-Delta(1,4)-steroid + AH2. Catalyzes the elimination of the C-1 and C-2 hydrogen atoms of the A-ring from the polycyclic ring structure of 3-ketosteroids. Is also involved in the formation of 1,4-androstadiene-3,17-dione (ADD) from 4-androstene-3,17-dione (AD) to. This Mycolicibacterium smegmatis (strain ATCC 700084 / mc(2)155) (Mycobacterium smegmatis) protein is 3-oxosteroid 1-dehydrogenase (ksdD).